Reading from the N-terminus, the 365-residue chain is Aminomethyltransferase (365 aa).

The protein belongs to the GcvT family. The glycine cleavage system is composed of four proteins: P, T, L and H.

It catalyses the reaction N(6)-[(R)-S(8)-aminomethyldihydrolipoyl]-L-lysyl-[protein] + (6S)-5,6,7,8-tetrahydrofolate = N(6)-[(R)-dihydrolipoyl]-L-lysyl-[protein] + (6R)-5,10-methylene-5,6,7,8-tetrahydrofolate + NH4(+). The glycine cleavage system catalyzes the degradation of glycine. The sequence is that of Aminomethyltransferase from Yersinia pseudotuberculosis serotype O:3 (strain YPIII).